The following is a 933-amino-acid chain: Isoleucine--tRNA ligase (933 aa).

Residues 57 to 67 (PYANGNIHVGH) carry the 'HIGH' region motif. L-isoleucyl-5'-AMP is bound at residue Glu554. The 'KMSKS' region motif lies at 595 to 599 (KMSKS). Lys598 lines the ATP pocket.

It belongs to the class-I aminoacyl-tRNA synthetase family. IleS type 1 subfamily. Monomer.

The protein resides in the cytoplasm. It carries out the reaction tRNA(Ile) + L-isoleucine + ATP = L-isoleucyl-tRNA(Ile) + AMP + diphosphate. Its function is as follows. Catalyzes the attachment of isoleucine to tRNA(Ile). As IleRS can inadvertently accommodate and process structurally similar amino acids such as valine, to avoid such errors it has two additional distinct tRNA(Ile)-dependent editing activities. One activity is designated as 'pretransfer' editing and involves the hydrolysis of activated Val-AMP. The other activity is designated 'posttransfer' editing and involves deacylation of mischarged Val-tRNA(Ile). The polypeptide is Isoleucine--tRNA ligase (Streptococcus pyogenes serotype M1).